The following is a 249-amino-acid chain: tRNA pseudouridine synthase A (249 aa).

Catalysis depends on Asp-53, which acts as the Nucleophile. Tyr-111 serves as a coordination point for substrate.

It belongs to the tRNA pseudouridine synthase TruA family. Homodimer.

It carries out the reaction uridine(38/39/40) in tRNA = pseudouridine(38/39/40) in tRNA. In terms of biological role, formation of pseudouridine at positions 38, 39 and 40 in the anticodon stem and loop of transfer RNAs. The chain is tRNA pseudouridine synthase A from Streptococcus mutans serotype c (strain ATCC 700610 / UA159).